The following is a 100-amino-acid chain: Urease subunit gamma (100 aa).

The protein belongs to the urease gamma subunit family. In terms of assembly, heterotrimer of UreA (gamma), UreB (beta) and UreC (alpha) subunits. Three heterotrimers associate to form the active enzyme.

It is found in the cytoplasm. The enzyme catalyses urea + 2 H2O + H(+) = hydrogencarbonate + 2 NH4(+). It functions in the pathway nitrogen metabolism; urea degradation; CO(2) and NH(3) from urea (urease route): step 1/1. This is Urease subunit gamma from Cupriavidus metallidurans (strain ATCC 43123 / DSM 2839 / NBRC 102507 / CH34) (Ralstonia metallidurans).